The sequence spans 145 residues: NADH-quinone oxidoreductase subunit A (145 aa).

3 helical membrane passes run Phe14–Leu34, Phe66–Trp86, and Val96–Val116.

The protein belongs to the complex I subunit 3 family. In terms of assembly, NDH-1 is composed of 13 different subunits. Subunits NuoA, H, J, K, L, M, N constitute the membrane sector of the complex.

It localises to the cell inner membrane. The enzyme catalyses a quinone + NADH + 5 H(+)(in) = a quinol + NAD(+) + 4 H(+)(out). In terms of biological role, NDH-1 shuttles electrons from NADH, via FMN and iron-sulfur (Fe-S) centers, to quinones in the respiratory chain. The immediate electron acceptor for the enzyme in this species is believed to be ubiquinone. Couples the redox reaction to proton translocation (for every two electrons transferred, four hydrogen ions are translocated across the cytoplasmic membrane), and thus conserves the redox energy in a proton gradient. The polypeptide is NADH-quinone oxidoreductase subunit A (Sodalis glossinidius (strain morsitans)).